Reading from the N-terminus, the 214-residue chain is MNQHLLEQFGTTHERVERGLAALRTGQGVLVADDADRENEGDLIFAAETLTPAQMAMMIRECSGIVCLCLPEERVSRLGLPMMVAHNTSSMGTAFTISIEAAEGVTTGVSAADRVRTVQAAIDDAACPGCLRSPGHVFPLRASPGGVLERRGHTEATVDLMRLAGLKPYGVLCELTNPDGTMARLPQLVDFAQRNRMTVLTVEDLVAYRQDKGL.

D-ribulose 5-phosphate-binding positions include 37–38 (RE), D42, 150–154 (RRGHT), and E174. E38 lines the Mg(2+) pocket. Mg(2+) is bound at residue H153.

Belongs to the DHBP synthase family. Homodimer. Mg(2+) serves as cofactor. Requires Mn(2+) as cofactor.

It carries out the reaction D-ribulose 5-phosphate = (2S)-2-hydroxy-3-oxobutyl phosphate + formate + H(+). It functions in the pathway cofactor biosynthesis; riboflavin biosynthesis; 2-hydroxy-3-oxobutyl phosphate from D-ribulose 5-phosphate: step 1/1. In terms of biological role, catalyzes the conversion of D-ribulose 5-phosphate to formate and 3,4-dihydroxy-2-butanone 4-phosphate. This is 3,4-dihydroxy-2-butanone 4-phosphate synthase from Nitratidesulfovibrio vulgaris (strain DP4) (Desulfovibrio vulgaris).